A 392-amino-acid chain; its full sequence is MSDKVKGKKQEEKDQSLRVQILVYRCMGIDLWSPTMANDRPWLTFVTMGPLFLFMVPMFLAAHEYITQVSLLSDTLGSTFASMLTLVKFLLFCYHRKEFVGLIYHIRAILAKEIEVWPDAREIIEVENQSDQMLSLTYTRCFGLAGIFAALKPFVGIILSSIRGDEIHLELPHNGVYPYDLQVVMFYVPTYLWNVMASYSAVTMALCVDSLLFFFTYNVCAIFKIAKHRMIHLPAVGGKEELEGLVQVLLLHQKGLQIADHIADKYRPLIFLQFFLSALQICFIGFQVADLFPNPQSLYFIAFVGSLLIALFIYSKCGENIKSASLDFGNGLYETNWTDFSPPTKRALLIAAMRAQRPCQMKGYFFEASMATFSTIVRSAVSYIMMLRSFNA.

Residues 1–41 (MSDKVKGKKQEEKDQSLRVQILVYRCMGIDLWSPTMANDRP) lie on the Cytoplasmic side of the membrane. Residues 42–62 (WLTFVTMGPLFLFMVPMFLAA) traverse the membrane as a helical segment. Residues 63 to 74 (HEYITQVSLLSD) are Extracellular-facing. A helical transmembrane segment spans residues 75 to 95 (TLGSTFASMLTLVKFLLFCYH). Topologically, residues 96 to 141 (RKEFVGLIYHIRAILAKEIEVWPDAREIIEVENQSDQMLSLTYTRC) are cytoplasmic. A helical membrane pass occupies residues 142–162 (FGLAGIFAALKPFVGIILSSI). Residues 163–202 (RGDEIHLELPHNGVYPYDLQVVMFYVPTYLWNVMASYSAV) lie on the Extracellular side of the membrane. The helical transmembrane segment at 203–223 (TMALCVDSLLFFFTYNVCAIF) threads the bilayer. The Cytoplasmic portion of the chain corresponds to 224 to 268 (KIAKHRMIHLPAVGGKEELEGLVQVLLLHQKGLQIADHIADKYRP). A helical membrane pass occupies residues 269-289 (LIFLQFFLSALQICFIGFQVA). The Extracellular portion of the chain corresponds to 290-297 (DLFPNPQS). The helical transmembrane segment at 298-318 (LYFIAFVGSLLIALFIYSKCG) threads the bilayer. Residues 319–362 (ENIKSASLDFGNGLYETNWTDFSPPTKRALLIAAMRAQRPCQMK) are Cytoplasmic-facing. The chain crosses the membrane as a helical span at residues 363 to 383 (GYFFEASMATFSTIVRSAVSY). Residues 384–392 (IMMLRSFNA) are Extracellular-facing.

This sequence belongs to the insect chemoreceptor superfamily. Heteromeric odorant receptor channel (TC 1.A.69) family. Or1a subfamily. In terms of assembly, interacts with Orco. Complexes exist early in the endomembrane system in olfactory sensory neurons (OSNs), coupling these complexes to the conserved ciliary trafficking pathway. In terms of tissue distribution, expressed in olfactory sensory neurons in the antenna.

Its subcellular location is the cell membrane. Its function is as follows. Odorant receptor which mediates acceptance or avoidance behavior, depending on its substrates. The odorant receptor repertoire encodes a large collection of odor stimuli that vary widely in identity, intensity, and duration. May form a complex with Orco to form odorant-sensing units, providing sensitive and prolonged odorant signaling and calcium permeability. The polypeptide is Odorant receptor 9a (Or9a) (Drosophila melanogaster (Fruit fly)).